The sequence spans 386 residues: Rhomboid domain-containing protein 3 (386 aa).

5 helical membrane passes run Val20–Ala40, Leu58–Trp78, Ala92–Leu112, Gly141–Ser161, and Pro163–Phe183. One can recognise a UBA domain in the interval Val324 to Gly362.

The protein localises to the membrane. The protein is Rhomboid domain-containing protein 3 (RHBDD3) of Homo sapiens (Human).